The chain runs to 429 residues: 5-methylthioadenosine/S-adenosylhomocysteine deaminase (429 aa).

Zn(2+) is bound by residues histidine 66 and histidine 68. Residues glutamate 95, arginine 147, arginine 158, and histidine 181 each contribute to the substrate site. Residue histidine 208 participates in Zn(2+) binding. Substrate-binding residues include glutamate 211 and aspartate 296. A Zn(2+)-binding site is contributed by aspartate 296.

This sequence belongs to the metallo-dependent hydrolases superfamily. MTA/SAH deaminase family. The cofactor is Zn(2+).

The enzyme catalyses S-adenosyl-L-homocysteine + H2O + H(+) = S-inosyl-L-homocysteine + NH4(+). It carries out the reaction S-methyl-5'-thioadenosine + H2O + H(+) = S-methyl-5'-thioinosine + NH4(+). Catalyzes the deamination of 5-methylthioadenosine and S-adenosyl-L-homocysteine into 5-methylthioinosine and S-inosyl-L-homocysteine, respectively. Is also able to deaminate adenosine. The polypeptide is 5-methylthioadenosine/S-adenosylhomocysteine deaminase (Caldicellulosiruptor saccharolyticus (strain ATCC 43494 / DSM 8903 / Tp8T 6331)).